The sequence spans 288 residues: Homoserine kinase (288 aa).

79–89 (PPARGLGSSSA) lines the ATP pocket.

This sequence belongs to the GHMP kinase family. Homoserine kinase subfamily.

The protein resides in the cytoplasm. It carries out the reaction L-homoserine + ATP = O-phospho-L-homoserine + ADP + H(+). Its pathway is amino-acid biosynthesis; L-threonine biosynthesis; L-threonine from L-aspartate: step 4/5. Catalyzes the ATP-dependent phosphorylation of L-homoserine to L-homoserine phosphate. The sequence is that of Homoserine kinase from Listeria monocytogenes serotype 4a (strain HCC23).